The primary structure comprises 310 residues: Malate dehydrogenase (310 aa).

NAD(+) is bound by residues 7 to 12 (GAGNVG) and Asp32. Substrate contacts are provided by Arg81 and Arg87. NAD(+) is bound by residues Asn94 and 117 to 119 (VSN). Substrate-binding residues include Asn119 and Arg150. The active-site Proton acceptor is the His174.

It belongs to the LDH/MDH superfamily. MDH type 3 family.

It catalyses the reaction (S)-malate + NAD(+) = oxaloacetate + NADH + H(+). In terms of biological role, catalyzes the reversible oxidation of malate to oxaloacetate. This is Malate dehydrogenase from Chloroherpeton thalassium (strain ATCC 35110 / GB-78).